The sequence spans 209 residues: Imidazole glycerol phosphate synthase subunit HisH (209 aa).

A Glutamine amidotransferase type-1 domain is found at 5-209 (AIAIIDYDMG…LRNFVALVKD (205 aa)). C83 acts as the Nucleophile in catalysis. Active-site residues include H188 and E190.

As to quaternary structure, heterodimer of HisH and HisF.

Its subcellular location is the cytoplasm. The enzyme catalyses 5-[(5-phospho-1-deoxy-D-ribulos-1-ylimino)methylamino]-1-(5-phospho-beta-D-ribosyl)imidazole-4-carboxamide + L-glutamine = D-erythro-1-(imidazol-4-yl)glycerol 3-phosphate + 5-amino-1-(5-phospho-beta-D-ribosyl)imidazole-4-carboxamide + L-glutamate + H(+). It catalyses the reaction L-glutamine + H2O = L-glutamate + NH4(+). The protein operates within amino-acid biosynthesis; L-histidine biosynthesis; L-histidine from 5-phospho-alpha-D-ribose 1-diphosphate: step 5/9. Its function is as follows. IGPS catalyzes the conversion of PRFAR and glutamine to IGP, AICAR and glutamate. The HisH subunit catalyzes the hydrolysis of glutamine to glutamate and ammonia as part of the synthesis of IGP and AICAR. The resulting ammonia molecule is channeled to the active site of HisF. The polypeptide is Imidazole glycerol phosphate synthase subunit HisH (Thermosynechococcus vestitus (strain NIES-2133 / IAM M-273 / BP-1)).